A 192-amino-acid chain; its full sequence is Ion-translocating oxidoreductase complex subunit B (192 aa).

The tract at residues 1–26 (MSAVWIAVIAISLLGLIFGLILGYAS) is hydrophobic. A 4Fe-4S domain is found at 32–91 (QDDPVVEKIDELLPQSQCGQCGYPGCRPYAEAVGAQGEKINRCAPGGEAVMLKIAALLNV). C49, C52, C57, C74, C117, C120, C123, C127, C147, C150, C153, and C157 together coordinate [4Fe-4S] cluster. 4Fe-4S ferredoxin-type domains follow at residues 108-137 (MLAVIDEPNCIGCTKCIQACPVDAIVGATR) and 138-167 (AMHTVMNDLCTGCNLCVAPCPTQCISLVPV).

This sequence belongs to the 4Fe4S bacterial-type ferredoxin family. RnfB subfamily. In terms of assembly, the complex is composed of six subunits: RnfA, RnfB, RnfC, RnfD, RnfE and RnfG. [4Fe-4S] cluster is required as a cofactor.

Its subcellular location is the cell inner membrane. In terms of biological role, part of a membrane-bound complex that couples electron transfer with translocation of ions across the membrane. This chain is Ion-translocating oxidoreductase complex subunit B, found in Klebsiella pneumoniae (strain 342).